Here is a 162-residue protein sequence, read N- to C-terminus: UPF0260 protein Atu0932 (162 aa).

Belongs to the UPF0260 family.

The polypeptide is UPF0260 protein Atu0932 (Agrobacterium fabrum (strain C58 / ATCC 33970) (Agrobacterium tumefaciens (strain C58))).